The following is a 76-amino-acid chain: Large ribosomal subunit protein uL24 (76 aa).

The protein belongs to the universal ribosomal protein uL24 family. Part of the 50S ribosomal subunit.

Functionally, one of two assembly initiator proteins, it binds directly to the 5'-end of the 23S rRNA, where it nucleates assembly of the 50S subunit. Its function is as follows. One of the proteins that surrounds the polypeptide exit tunnel on the outside of the subunit. The protein is Large ribosomal subunit protein uL24 of Wolinella succinogenes (strain ATCC 29543 / DSM 1740 / CCUG 13145 / JCM 31913 / LMG 7466 / NCTC 11488 / FDC 602W) (Vibrio succinogenes).